Reading from the N-terminus, the 166-residue chain is Ribosome maturation factor RimM (166 aa).

The PRC barrel domain occupies 91-165 (DDEFYHADLI…RIVADPPEGL (75 aa)).

The protein belongs to the RimM family. In terms of assembly, binds ribosomal protein uS19.

The protein localises to the cytoplasm. Functionally, an accessory protein needed during the final step in the assembly of 30S ribosomal subunit, possibly for assembly of the head region. Essential for efficient processing of 16S rRNA. May be needed both before and after RbfA during the maturation of 16S rRNA. It has affinity for free ribosomal 30S subunits but not for 70S ribosomes. The protein is Ribosome maturation factor RimM of Dinoroseobacter shibae (strain DSM 16493 / NCIMB 14021 / DFL 12).